Reading from the N-terminus, the 587-residue chain is Pentatricopeptide repeat-containing protein OGR1, mitochondrial (587 aa).

The transit peptide at 1–30 directs the protein to the mitochondrion; it reads MSVSAAARHLESLLPRLASLRHYLQFHARL. PPR repeat units follow at residues 145–179, 200–203, 217–251, 252–286, 287–315, 319–349, 351–381, and 383–417; these read DVRLLTTLLDSYAKCGDLASARKVFDEMTVRDVAT, FHRL, NEVTIVAALSACAQIGLLKDGMYVHEFAKRFGLDR, NVRVCNSLIDMYSKCGSLSRALDVFHSIKPEDQTL, VSYNAAIQAHSMHGHGGDALRLFDEMPTR, DGVTYLAVLCGCNHSGLVDDGLRVFNSMRVA, NMKHYGTIVDLLGRAGRLTEAYDTVISMPFP, and DIVLWQTLLGAAKMHGVVELAELAANKLAELGSNV. Residues 386 to 461 are type E motif; it reads LWQTLLGAAK…VPGFSYTEID (76 aa). The tract at residues 462–492 is type E(+) motif; sequence GVMHKFINGDKEHPRWQEIYRALEDIVSRIS. The segment at 493-587 is type DYW motif; sequence ELGYEPETSN…DGQCSCRDYW (95 aa).

The protein localises to the mitochondrion. Involved in multiple sites RNA editing events in mitochondria. Essential for C-to-U RNA editing at seven specific sites of nad2, nad4, cox2, cox3 and ccmC transcripts, all coding for proteins involved in the mitochondrial electron transport chain coupled to ATP generation. Required for normal growth and development. This Oryza sativa subsp. japonica (Rice) protein is Pentatricopeptide repeat-containing protein OGR1, mitochondrial.